We begin with the raw amino-acid sequence, 388 residues long: Carbamoyl phosphate synthase small chain (388 aa).

Residues 1–198 (MSQDLLPGVT…WPEGYAKLDK (198 aa)) are CPSase. L-glutamine is bound by residues S53, G250, and G252. The Glutamine amidotransferase type-1 domain occupies 202 to 388 (EVVVIDYGVK…RFAGLMDAAK (187 aa)). C279 functions as the Nucleophile in the catalytic mechanism. Positions 280, 283, 321, 323, and 324 each coordinate L-glutamine. Catalysis depends on residues H363 and E365.

Belongs to the CarA family. Composed of two chains; the small (or glutamine) chain promotes the hydrolysis of glutamine to ammonia, which is used by the large (or ammonia) chain to synthesize carbamoyl phosphate. Tetramer of heterodimers (alpha,beta)4.

It carries out the reaction hydrogencarbonate + L-glutamine + 2 ATP + H2O = carbamoyl phosphate + L-glutamate + 2 ADP + phosphate + 2 H(+). The catalysed reaction is L-glutamine + H2O = L-glutamate + NH4(+). It participates in amino-acid biosynthesis; L-arginine biosynthesis; carbamoyl phosphate from bicarbonate: step 1/1. It functions in the pathway pyrimidine metabolism; UMP biosynthesis via de novo pathway; (S)-dihydroorotate from bicarbonate: step 1/3. Functionally, small subunit of the glutamine-dependent carbamoyl phosphate synthetase (CPSase). CPSase catalyzes the formation of carbamoyl phosphate from the ammonia moiety of glutamine, carbonate, and phosphate donated by ATP, constituting the first step of 2 biosynthetic pathways, one leading to arginine and/or urea and the other to pyrimidine nucleotides. The small subunit (glutamine amidotransferase) binds and cleaves glutamine to supply the large subunit with the substrate ammonia. This chain is Carbamoyl phosphate synthase small chain, found in Caulobacter vibrioides (strain ATCC 19089 / CIP 103742 / CB 15) (Caulobacter crescentus).